The chain runs to 640 residues: 1-deoxy-D-xylulose-5-phosphate synthase (640 aa).

Thiamine diphosphate-binding positions include H78 and 119–121 (GHS). D151 contributes to the Mg(2+) binding site. Thiamine diphosphate is bound by residues 152 to 153 (GA), N180, Y289, and E371. Position 180 (N180) interacts with Mg(2+).

The protein belongs to the transketolase family. DXPS subfamily. As to quaternary structure, homodimer. The cofactor is Mg(2+). It depends on thiamine diphosphate as a cofactor.

The catalysed reaction is D-glyceraldehyde 3-phosphate + pyruvate + H(+) = 1-deoxy-D-xylulose 5-phosphate + CO2. The protein operates within metabolic intermediate biosynthesis; 1-deoxy-D-xylulose 5-phosphate biosynthesis; 1-deoxy-D-xylulose 5-phosphate from D-glyceraldehyde 3-phosphate and pyruvate: step 1/1. Catalyzes the acyloin condensation reaction between C atoms 2 and 3 of pyruvate and glyceraldehyde 3-phosphate to yield 1-deoxy-D-xylulose-5-phosphate (DXP). In Bartonella quintana (strain Toulouse) (Rochalimaea quintana), this protein is 1-deoxy-D-xylulose-5-phosphate synthase.